The primary structure comprises 310 residues: UDP-N-acetylenolpyruvoylglucosamine reductase (310 aa).

An FAD-binding PCMH-type domain is found at 35–203 (RAGGAAEALV…TRVRFALRKG (169 aa)). Arg183 is a catalytic residue. The active-site Proton donor is Ser232. Glu302 is an active-site residue.

The protein belongs to the MurB family. FAD serves as cofactor.

Its subcellular location is the cytoplasm. It catalyses the reaction UDP-N-acetyl-alpha-D-muramate + NADP(+) = UDP-N-acetyl-3-O-(1-carboxyvinyl)-alpha-D-glucosamine + NADPH + H(+). It participates in cell wall biogenesis; peptidoglycan biosynthesis. Its function is as follows. Cell wall formation. This chain is UDP-N-acetylenolpyruvoylglucosamine reductase, found in Myxococcus xanthus (strain DK1622).